Reading from the N-terminus, the 35-residue chain is Photosystem II reaction center protein T (35 aa).

The chain crosses the membrane as a helical span at residues 3 to 23 (ALVYTFLLVSTLGIIFFAIFF).

It belongs to the PsbT family. PSII is composed of 1 copy each of membrane proteins PsbA, PsbB, PsbC, PsbD, PsbE, PsbF, PsbH, PsbI, PsbJ, PsbK, PsbL, PsbM, PsbT, PsbY, PsbZ, Psb30/Ycf12, at least 3 peripheral proteins of the oxygen-evolving complex and a large number of cofactors. It forms dimeric complexes.

The protein resides in the plastid. It localises to the chloroplast thylakoid membrane. Functionally, found at the monomer-monomer interface of the photosystem II (PS II) dimer, plays a role in assembly and dimerization of PSII. PSII is a light-driven water plastoquinone oxidoreductase, using light energy to abstract electrons from H(2)O, generating a proton gradient subsequently used for ATP formation. The protein is Photosystem II reaction center protein T of Taxus brevifolia (Pacific yew).